A 140-amino-acid polypeptide reads, in one-letter code: uncharacterized protein (140 aa).

The next 3 membrane-spanning stretches (helical) occupy residues 42–62, 65–85, and 96–116; these read AFLF…IFAS, ASFL…SALG, and RASD…MLCF.

Its subcellular location is the membrane. This is an uncharacterized protein from Saccharomyces cerevisiae (strain ATCC 204508 / S288c) (Baker's yeast).